The chain runs to 499 residues: Sensor histidine kinase PdtaS (499 aa).

The tract at residues 4 to 149 (LGDLLAEHTM…PLEGAYLDCA (146 aa)) is GAF. The PAS-like stretch occupies residues 178–289 (DGFIRLNEGG…TEVKRRDRAL (112 aa)). The 196-residue stretch at 298–493 (EIHHRVKNNL…DVVLRVPIGR (196 aa)) folds into the Histidine kinase domain. H301 is subject to Phosphohistidine; by autocatalysis.

Autophosphorylated.

It localises to the cytoplasm. The catalysed reaction is ATP + protein L-histidine = ADP + protein N-phospho-L-histidine.. Member of the two-component regulatory system PdtaR/PdtaS. This two-component system plays an essential role in mycobacterial adaptation to poor nutrient conditions. Nutrient deprivation results in increasing intracellular concentrations of cyclic diguanosine monophosphate (c-di-GMP), which binds to the PdtaS sensor and promotes its autophosphorylation, leading to the activation of the signaling cascade. The phosphate group is then transferred to PdtaR. In Mycolicibacterium smegmatis (strain ATCC 700084 / mc(2)155) (Mycobacterium smegmatis), this protein is Sensor histidine kinase PdtaS.